We begin with the raw amino-acid sequence, 603 residues long: Spastin (603 aa).

Residues 1-34 (MNSPGGRNNKKKPVTPAAETGPGPPTPPPPPAET) are disordered. Over 1–54 (MNSPGGRNNKKKPVTPAAETGPGPPTPPPPPAETQVLLAPPSLHKRNLYLFSYP) the chain is Cytoplasmic. Pro residues predominate over residues 22–32 (PGPPTPPPPPA). Residues 55 to 75 (LLAAFSLLRFLAFQLGLLFVW) constitute an intramembrane region (helical). Residues 76–603 (FCERLSRRVM…WNKEFGDTTV (528 aa)) lie on the Cytoplasmic side of the membrane. An MIT domain is found at 113-188 (YHQQAFQYIS…LMAKDRLQLL (76 aa)). A disordered region spans residues 216–294 (GLLKPEKGAV…RTNKPTTPTT (79 aa)). Basic and acidic residues predominate over residues 219–231 (KPEKGAVPKKKDP). Residues 281–294 (KNNTRTNKPTTPTT) are compositionally biased toward low complexity. Residue 369 to 376 (GPPGNGKT) participates in ATP binding.

This sequence belongs to the AAA ATPase family. Spastin subfamily. As to quaternary structure, homohexamer. The homohexamer is stabilized by ATP-binding. The homohexamer may adopt a ring conformation through which microtubules pass prior to being severed. Interacts with microtubules.

The protein localises to the membrane. It localises to the cytoplasm. Its subcellular location is the cytoskeleton. It is found in the microtubule organizing center. The protein resides in the centrosome. The protein localises to the perinuclear region. It localises to the nucleus. It carries out the reaction n ATP + n H2O + a microtubule = n ADP + n phosphate + (n+1) alpha/beta tubulin heterodimers.. In terms of biological role, ATP-dependent microtubule severing protein that specifically recognizes and cuts microtubules that are polyglutamylated. Preferentially recognizes and acts on microtubules decorated with short polyglutamate tails: severing activity increases as the number of glutamates per tubulin rises from one to eight, but decreases beyond this glutamylation threshold. Microtubule severing promotes reorganization of cellular microtubule arrays and the release of microtubules from the centrosome following nucleation. Required for membrane traffic from the endoplasmic reticulum (ER) to the Golgi and for completion of the abscission stage of cytokinesis. Also plays a role in axon growth and the formation of axonal branches. The polypeptide is Spastin (Xenopus tropicalis (Western clawed frog)).